Here is a 563-residue protein sequence, read N- to C-terminus: Mitochondrial distribution and morphology protein 34 (563 aa).

Positions 1–195 (MAFNFNWSPL…LPAIIHRLSL (195 aa)) constitute an SMP-LTD domain. Disordered regions lie at residues 298–460 (ERGD…QIPT) and 535–563 (RHDK…PKAL). Polar residues-rich tracts occupy residues 303-332 (AGTT…FSNR) and 346-357 (SLVNMNSATTGL). Over residues 365 to 383 (SRSHTTRKKKNRVVNLRKS) the composition is skewed to basic residues. Composition is skewed to polar residues over residues 386-402 (TDNV…SITA) and 444-460 (PSRS…QIPT).

This sequence belongs to the MDM34 family. In terms of assembly, component of the ER-mitochondria encounter structure (ERMES) or MDM complex, composed of mmm1, mdm10, mdm12 and mdm34.

The protein localises to the mitochondrion outer membrane. In terms of biological role, component of the ERMES/MDM complex, which serves as a molecular tether to connect the endoplasmic reticulum (ER) and mitochondria. Components of this complex are involved in the control of mitochondrial shape and protein biogenesis, and function in nonvesicular lipid trafficking between the ER and mitochondria. Mdm34 is required for the interaction of the ER-resident membrane protein mmm1 and the outer mitochondrial membrane-resident beta-barrel protein mdm10. This chain is Mitochondrial distribution and morphology protein 34, found in Sclerotinia sclerotiorum (strain ATCC 18683 / 1980 / Ss-1) (White mold).